The sequence spans 717 residues: Probable cyclic nucleotide-gated ion channel 5 (717 aa).

Residues 1 to 102 (MAGKRENFVR…DKFLLYCNKL (102 aa)) lie on the Cytoplasmic side of the membrane. The chain crosses the membrane as a helical span at residues 103-123 (FVASCILSVFVDPFFFYLPVI). Over 124–136 (NAESKCLGIDRKL) the chain is Extracellular. Residues 137–157 (AITASTLRTFIDVFYLAHMAL) form a helical membrane-spanning segment. Residues 158-190 (QLRTAYIAPSSRVFGRGELVIDPAQIAKRYLQR) lie on the Cytoplasmic side of the membrane. Residues 191–211 (WFIIDFLSVLPLPQIVVWRFL) form a helical membrane-spanning segment. The Extracellular segment spans residues 212–224 (QSSNGSDVLATKQ). A helical transmembrane segment spans residues 225–245 (ALLFIVLVQYIPRFLRVLPLT). Residues 246–265 (SELKRTAGVFAETAWAGAAY) lie on the Cytoplasmic side of the membrane. The chain crosses the membrane as a helical span at residues 266 to 286 (YLLLYMLASHIVGAFWYLLAL). Residues 287–391 (ERNDACWQEA…GQGLETSTYP (105 aa)) are Extracellular-facing. The helical transmembrane segment at 392-412 (MEIIFSISLAISGLILFALLI) threads the bilayer. Topologically, residues 413–717 (GNMQTYLQSL…KPPEPDFTAD (305 aa)) are cytoplasmic. Residues 498–628 (LFKS…TFRF) and glutamate 569 contribute to the a nucleoside 3',5'-cyclic phosphate site. A calmodulin-binding region spans residues 614–629 (FRRLHSRQVQHTFRFY). Positions 634-663 (RTWAACFIQAAWRRYCKRKKMEEAEAEAAA) constitute an IQ domain.

Belongs to the cyclic nucleotide-gated cation channel (TC 1.A.1.5) family. As to quaternary structure, homotetramer or heterotetramer.

The protein resides in the cell membrane. Its function is as follows. Probable cyclic nucleotide-gated ion channel. The protein is Probable cyclic nucleotide-gated ion channel 5 (CNGC5) of Arabidopsis thaliana (Mouse-ear cress).